A 69-amino-acid chain; its full sequence is Large ribosomal subunit protein eL38 (69 aa).

This sequence belongs to the eukaryotic ribosomal protein eL38 family.

The polypeptide is Large ribosomal subunit protein eL38 (RPL38) (Solanum lycopersicum (Tomato)).